Reading from the N-terminus, the 463-residue chain is Glutamyl-tRNA reductase (463 aa).

Residues 49-52 (TCNR), S109, 114-116 (EQQ), and Q120 contribute to the substrate site. C50 (nucleophile) is an active-site residue. 196–201 (GAGAMS) serves as a coordination point for NADP(+).

Belongs to the glutamyl-tRNA reductase family. As to quaternary structure, homodimer.

It catalyses the reaction (S)-4-amino-5-oxopentanoate + tRNA(Glu) + NADP(+) = L-glutamyl-tRNA(Glu) + NADPH + H(+). Its pathway is porphyrin-containing compound metabolism; protoporphyrin-IX biosynthesis; 5-aminolevulinate from L-glutamyl-tRNA(Glu): step 1/2. In terms of biological role, catalyzes the NADPH-dependent reduction of glutamyl-tRNA(Glu) to glutamate 1-semialdehyde (GSA). In Corynebacterium glutamicum (strain R), this protein is Glutamyl-tRNA reductase.